Reading from the N-terminus, the 508-residue chain is Adenosine deaminase (508 aa).

The N-terminal stretch at Met1–Ala18 is a signal peptide.

The protein belongs to the metallo-dependent hydrolases superfamily. Adenosine and AMP deaminases family. ADGF subfamily. Requires Zn(2+) as cofactor. In terms of tissue distribution, salivary gland (at protein level).

It is found in the secreted. It carries out the reaction adenosine + H2O + H(+) = inosine + NH4(+). Catalyzes the deamination of adenosine to inosine. This Lutzomyia longipalpis (Sand fly) protein is Adenosine deaminase.